The primary structure comprises 687 residues: UvrABC system protein C (687 aa).

Residues 16 to 95 enclose the GIY-YIG domain; sequence TEPGVYKFRD…IKKFDPHFNV (80 aa). One can recognise a UVR domain in the interval 208–243; sequence DSVVRRLTNEMISASEALDFEKAARKRDDLNAVRKI.

This sequence belongs to the UvrC family. In terms of assembly, interacts with UvrB in an incision complex.

Its subcellular location is the cytoplasm. Its function is as follows. The UvrABC repair system catalyzes the recognition and processing of DNA lesions. UvrC both incises the 5' and 3' sides of the lesion. The N-terminal half is responsible for the 3' incision and the C-terminal half is responsible for the 5' incision. This chain is UvrABC system protein C, found in Corynebacterium diphtheriae (strain ATCC 700971 / NCTC 13129 / Biotype gravis).